We begin with the raw amino-acid sequence, 243 residues long: 7-carboxy-7-deazaguanine synthase (243 aa).

Substrate is bound by residues 15-17 and Arg-30; that span reads IQG. One can recognise a Radical SAM core domain in the interval 21–239; sequence VIGQKTMFVR…PQLHTLLWGN (219 aa). Cys-34, Cys-38, and Cys-41 together coordinate [4Fe-4S] cluster. Ser-43 provides a ligand contact to Mg(2+). Substrate is bound at residue Ser-81. S-adenosyl-L-methionine is bound by residues Gly-83 and 127 to 129; that span reads SPK.

It belongs to the radical SAM superfamily. 7-carboxy-7-deazaguanine synthase family. As to quaternary structure, homodimer. [4Fe-4S] cluster serves as cofactor. S-adenosyl-L-methionine is required as a cofactor. The cofactor is Mg(2+).

It catalyses the reaction 6-carboxy-5,6,7,8-tetrahydropterin + H(+) = 7-carboxy-7-deazaguanine + NH4(+). The protein operates within purine metabolism; 7-cyano-7-deazaguanine biosynthesis. Its function is as follows. Catalyzes the complex heterocyclic radical-mediated conversion of 6-carboxy-5,6,7,8-tetrahydropterin (CPH4) to 7-carboxy-7-deazaguanine (CDG), a step common to the biosynthetic pathways of all 7-deazapurine-containing compounds. The protein is 7-carboxy-7-deazaguanine synthase of Bacillus subtilis (strain 168).